The sequence spans 876 residues: Alanine--tRNA ligase (876 aa).

Residues His563, His567, Cys665, and His669 each contribute to the Zn(2+) site.

The protein belongs to the class-II aminoacyl-tRNA synthetase family. Zn(2+) serves as cofactor.

The protein localises to the cytoplasm. The enzyme catalyses tRNA(Ala) + L-alanine + ATP = L-alanyl-tRNA(Ala) + AMP + diphosphate. Catalyzes the attachment of alanine to tRNA(Ala) in a two-step reaction: alanine is first activated by ATP to form Ala-AMP and then transferred to the acceptor end of tRNA(Ala). Also edits incorrectly charged Ser-tRNA(Ala) and Gly-tRNA(Ala) via its editing domain. The chain is Alanine--tRNA ligase from Shouchella clausii (strain KSM-K16) (Alkalihalobacillus clausii).